We begin with the raw amino-acid sequence, 122 residues long: Large ribosomal subunit protein uL14c (122 aa).

Belongs to the universal ribosomal protein uL14 family. As to quaternary structure, part of the 50S ribosomal subunit.

Its subcellular location is the plastid. It is found in the chloroplast. Binds to 23S rRNA. The chain is Large ribosomal subunit protein uL14c from Cryptomeria japonica (Japanese cedar).